Here is a 143-residue protein sequence, read N- to C-terminus: Large-conductance mechanosensitive channel (143 aa).

2 consecutive transmembrane segments (helical) span residues 16–36 (VIDL…VTAL) and 84–104 (INTV…VKLI).

Belongs to the MscL family. Homopentamer.

It is found in the cell inner membrane. Its function is as follows. Channel that opens in response to stretch forces in the membrane lipid bilayer. May participate in the regulation of osmotic pressure changes within the cell. In Xanthomonas campestris pv. campestris (strain 8004), this protein is Large-conductance mechanosensitive channel.